The following is a 267-amino-acid chain: Hydroxyethylthiazole kinase 2 (267 aa).

Methionine 41 is a substrate binding site. 2 residues coordinate ATP: lysine 116 and threonine 166. Residue glycine 193 participates in substrate binding.

The protein belongs to the Thz kinase family. Requires Mg(2+) as cofactor.

It catalyses the reaction 5-(2-hydroxyethyl)-4-methylthiazole + ATP = 4-methyl-5-(2-phosphooxyethyl)-thiazole + ADP + H(+). Its pathway is cofactor biosynthesis; thiamine diphosphate biosynthesis; 4-methyl-5-(2-phosphoethyl)-thiazole from 5-(2-hydroxyethyl)-4-methylthiazole: step 1/1. Functionally, catalyzes the phosphorylation of the hydroxyl group of 4-methyl-5-beta-hydroxyethylthiazole (THZ). The chain is Hydroxyethylthiazole kinase 2 from Streptococcus pneumoniae (strain Hungary19A-6).